The following is a 399-amino-acid chain: Probable peptidoglycan glycosyltransferase FtsW (399 aa).

At 1–32 the chain is on the cytoplasmic side; that stretch reads MMAGFAQTTITKINQFYERWMPRLPAEMTARN. A helical membrane pass occupies residues 33-53; that stretch reads VLVFCVVCLLCIGSVMVASAS. At 54–72 the chain is on the periplasmic side; that stretch reads MPYAEYMHENPFHYVVRHA. The chain crosses the membrane as a helical span at residues 73–93; sequence ISIATAAIVAYLVYKVPLNVW. Residues 94-97 lie on the Cytoplasmic side of the membrane; sequence FKNT. A helical membrane pass occupies residues 98 to 118; that stretch reads FSFWLITILLLLAVLVIGTEV. Residues 119–126 are Periplasmic-facing; it reads NGSRRWIR. A helical membrane pass occupies residues 127-147; it reads LAGFTLQPTEVAKVMMAIFTA. At 148–159 the chain is on the cytoplasmic side; it reads DYVVRRAKEVRT. The chain crosses the membrane as a helical span at residues 160–180; it reads HWKGLVRLSGVMAITVGLIIA. Over 181 to 183 the chain is Periplasmic; it reads EPD. Residues 184-204 form a helical membrane-spanning segment; it reads LGATVVIVLMMVGIFFLAGAP. Residues 205–207 lie on the Cytoplasmic side of the membrane; the sequence is PTQ. The helical transmembrane segment at 208–228 threads the bilayer; that stretch reads FAIMLGAVVMGIGFLILFEPY. The Periplasmic segment spans residues 229–292; sequence RLARAMSFTN…DFMLAVLGEE (64 aa). A helical transmembrane segment spans residues 293–313; it reads FGFVGISIVIGLSFIMLACCI. Topologically, residues 314–327 are cytoplasmic; that stretch reads KIGHRALKHNFLRA. The chain crosses the membrane as a helical span at residues 328-348; the sequence is GYLAYGISIIFLLQIIVNAGM. The Periplasmic portion of the chain corresponds to 349–359; the sequence is NMGLMPTKGLT. A helical membrane pass occupies residues 360–380; it reads LPFISYGGTSLMMCAAMISLI. Residues 381 to 399 lie on the Cytoplasmic side of the membrane; sequence LRIDASTQEINPDREESNF.

It belongs to the SEDS family. FtsW subfamily.

The protein localises to the cell inner membrane. It catalyses the reaction [GlcNAc-(1-&gt;4)-Mur2Ac(oyl-L-Ala-gamma-D-Glu-L-Lys-D-Ala-D-Ala)](n)-di-trans,octa-cis-undecaprenyl diphosphate + beta-D-GlcNAc-(1-&gt;4)-Mur2Ac(oyl-L-Ala-gamma-D-Glu-L-Lys-D-Ala-D-Ala)-di-trans,octa-cis-undecaprenyl diphosphate = [GlcNAc-(1-&gt;4)-Mur2Ac(oyl-L-Ala-gamma-D-Glu-L-Lys-D-Ala-D-Ala)](n+1)-di-trans,octa-cis-undecaprenyl diphosphate + di-trans,octa-cis-undecaprenyl diphosphate + H(+). It participates in cell wall biogenesis; peptidoglycan biosynthesis. Functionally, peptidoglycan polymerase that is essential for cell division. This is Probable peptidoglycan glycosyltransferase FtsW from Acinetobacter baylyi (strain ATCC 33305 / BD413 / ADP1).